The following is a 260-amino-acid chain: Troponin I 3 (260 aa).

The segment covering 192–219 has biased composition (basic and acidic residues); sequence DLDEIMAKKKGTADGKPEWSKKEKKEEE. The tract at residues 192-260 is disordered; the sequence is DLDEIMAKKK…EEEEEEEEEE (69 aa). The segment covering 231-260 has biased composition (acidic residues); that stretch reads PEAEPEPEAAEPAAEEPEAEEEEEEEEEEE.

It belongs to the troponin I family. As to expression, expressed in body wall muscle from first larval stage to adult. In adults expression is predominantly in vulval and anal muscles, body wall muscle expression is weaker. Also expressed in vulval muscles of hermaphrodites and the sex muscles of males.

Functionally, troponin I is the inhibitory subunit of troponin, the thin filament regulatory complex which confers calcium-sensitivity to muscle actomyosin ATPase activity. This is Troponin I 3 (tni-3) from Caenorhabditis elegans.